Consider the following 268-residue polypeptide: MSDDREIQLEAEKHGVFLTTMQRFYNWGRRSSIWPLSFGLACCAIEMMATGLARFDLARFGAEMFRASPRQADLMIVAGTVTKKMAPQVVRLYNQMPEPRYVISMGACATSGGPFRDGYNVLRGIDLLIPVDVYIPGCPPRPEALLHALMTLQKQIDAQRLNQVRWYGKREAKEYPVPTFGKHGLEIDGKLIDPVGGLPLVSPYTSPTHGEMRSGMIEHPELVRHFPIMDETVERESPYKATGIAIEIAHNDLKRPAVEVDHAEDERR.

The [4Fe-4S] cluster site is built by Cys42, Cys43, Cys108, and Cys138.

Belongs to the complex I 20 kDa subunit family. NDH-1 is composed of 14 different subunits. Subunits NuoB, C, D, E, F, and G constitute the peripheral sector of the complex. The cofactor is [4Fe-4S] cluster.

Its subcellular location is the cell membrane. The enzyme catalyses a quinone + NADH + 5 H(+)(in) = a quinol + NAD(+) + 4 H(+)(out). NDH-1 shuttles electrons from NADH, via FMN and iron-sulfur (Fe-S) centers, to quinones in the respiratory chain. The immediate electron acceptor for the enzyme in this species is believed to be ubiquinone. Couples the redox reaction to proton translocation (for every two electrons transferred, four hydrogen ions are translocated across the cytoplasmic membrane), and thus conserves the redox energy in a proton gradient. The chain is NADH-quinone oxidoreductase subunit B 1 from Roseiflexus sp. (strain RS-1).